The following is a 424-amino-acid chain: MPPKKHSGFMMFVNEWRDNNPEGRNLSIAQAVSRCGSIWEKMTAQQRGPYNSGAKNADVLTRVKKERLNCHGQVLSQVELEEREMAESQINMKRCTERIVMDAKRSHDLENTKFVFVAFNYFTKALTTDVYVPAEFSASEYSFNEGIMSVYSTLIDPGQIIFGQGSDAQHHSSTTHNLPLPPNALGEKNMGKLYRNILEYLSKIQEGKDATKPFVVFTKTDMVPVVKSCFRYLACENQDGSYENGDQIQVLDIQYLLFILKKEVLDIAGVSDEKINLYVTDAYFLKDFFEFTPEISCQYHEENDRSKYCTQSLVMRWAYTFSDYMCSDLAISVQPGKHIPPKTKPNYRFYRQPPAGDHLHHPLTCQQTILRLLATLTRKTNFHLSVGGEPPTVALVPSDLTLWDPGIYPLTPVPFMTFLTTTLV.

The HMG box DNA-binding region spans 2-69; the sequence is PPKKHSGFMM…LTRVKKERLN (68 aa).

It belongs to the maelstrom family.

Its subcellular location is the cytoplasm. It is found in the nucleus. Its function is as follows. Involved both in the piRNA and miRNA metabolic processes. As a component of the meiotic nuage, plays a central role during oogenesis by repressing transposable elements and preventing their mobilization, which is essential for the germline integrity. Repression of transposable elements is mediated via the piRNA metabolic process, which mediates the repression of transposable elements during meiosis by forming complexes composed of piRNAs and Piwi proteins and governs the repression of transposons. As a nuclear component, it is required for proper differentiation in the germline stem cell (GSC) lineage by repressing microRNA-7 (miR-7), thereby acting as an indirect regulator of bag-of-marbles (Bam). Acts by binding to the promoter of miR-7 gene and repressing its expression; miR-7 repression alleviates the Bam repression by miR-7, thereby allowing differentiation in the germline stem cell (GSC) lineage. The chain is Protein maelstrom 1 (mael1) from Drosophila ananassae (Fruit fly).